Here is a 205-residue protein sequence, read N- to C-terminus: MLAVYLHGFILSAAMILPLGPQNVFVMNQGIKRQHHLMSASLCALSDIILICAGIFGGSALLSRSPLLLALVTWGGVAFLMWYGWGALMAAWRGDGVASSATSVTQGRWRILVTLLAVTWLNPHVYLDTFVVLGSLGGQLLPDIRPWFALGAVTASIVWFFALALLAAWLSPWLNRPVAQRIINLFVGGVMGFIAFQLARQGFGL.

6 consecutive transmembrane segments (helical) span residues 1-21 (MLAV…PLGP), 42-62 (LCAL…SALL), 67-87 (LLLA…GWGA), 111-131 (ILVT…DTFV), 147-167 (WFAL…ALLA), and 185-205 (LFVG…GFGL).

This sequence belongs to the LysE/ArgO transporter (TC 2.A.75) family.

It localises to the cell inner membrane. It catalyses the reaction L-arginine(in) = L-arginine(out). Its function is as follows. Involved in the export of arginine. Important to control the intracellular level of arginine and the correct balance between arginine and lysine. The protein is Arginine exporter protein ArgO of Yersinia pseudotuberculosis serotype IB (strain PB1/+).